Here is a 573-residue protein sequence, read N- to C-terminus: 2-succinyl-5-enolpyruvyl-6-hydroxy-3-cyclohexene-1-carboxylate synthase (573 aa).

It belongs to the TPP enzyme family. MenD subfamily. Homodimer. The cofactor is Mg(2+). Mn(2+) is required as a cofactor. Thiamine diphosphate serves as cofactor.

The catalysed reaction is isochorismate + 2-oxoglutarate + H(+) = 5-enolpyruvoyl-6-hydroxy-2-succinyl-cyclohex-3-ene-1-carboxylate + CO2. It functions in the pathway quinol/quinone metabolism; 1,4-dihydroxy-2-naphthoate biosynthesis; 1,4-dihydroxy-2-naphthoate from chorismate: step 2/7. It participates in quinol/quinone metabolism; menaquinone biosynthesis. Its function is as follows. Catalyzes the thiamine diphosphate-dependent decarboxylation of 2-oxoglutarate and the subsequent addition of the resulting succinic semialdehyde-thiamine pyrophosphate anion to isochorismate to yield 2-succinyl-5-enolpyruvyl-6-hydroxy-3-cyclohexene-1-carboxylate (SEPHCHC). This Shewanella sp. (strain ANA-3) protein is 2-succinyl-5-enolpyruvyl-6-hydroxy-3-cyclohexene-1-carboxylate synthase.